The primary structure comprises 1014 residues: Probable sucrose-phosphate synthase 5 (1014 aa).

Basic and acidic residues-rich tracts occupy residues Arg29–Ala41 and Glu49–Thr58. Disordered regions lie at residues Arg29–Glu108 and Gln648–Pro677.

This sequence belongs to the glycosyltransferase 1 family. Homodimer or homotetramer. Expressed in germinating seeds.

It carries out the reaction beta-D-fructose 6-phosphate + UDP-alpha-D-glucose = sucrose 6(F)-phosphate + UDP + H(+). The protein operates within glycan biosynthesis; sucrose biosynthesis; sucrose from D-fructose 6-phosphate and UDP-alpha-D-glucose: step 1/2. Activity is regulated by phosphorylation and moderated by concentration of metabolites and light. In terms of biological role, plays a role in photosynthetic sucrose synthesis by catalyzing the rate-limiting step of sucrose biosynthesis from UDP-glucose and fructose- 6-phosphate. Involved in the regulation of carbon partitioning in the leaves of plants. May regulate the synthesis of sucrose and therefore play a major role as a limiting factor in the export of photoassimilates out of the leaf. Plays a role for sucrose availability that is essential for plant growth and fiber elongation. This Oryza sativa subsp. japonica (Rice) protein is Probable sucrose-phosphate synthase 5 (SPS5).